The sequence spans 241 residues: Glutamate/aspartate import ATP-binding protein GltL (241 aa).

An ABC transporter domain is found at 2 to 236; sequence ITLKNVSKWY…PKSDRAKDFL (235 aa). Position 34–41 (34–41) interacts with ATP; sequence GPSGSGKS.

Belongs to the ABC transporter superfamily. In terms of assembly, the complex is composed of two ATP-binding proteins (GltL), two transmembrane proteins (GltJ and GltK) and a solute-binding protein (GltI).

The protein resides in the cell inner membrane. It catalyses the reaction a polar amino acid(out) + ATP + H2O = a polar amino acid(in) + ADP + phosphate + H(+). It carries out the reaction L-glutamate(out) + ATP + H2O = L-glutamate(in) + ADP + phosphate + H(+). The enzyme catalyses L-aspartate(out) + ATP + H2O = L-aspartate(in) + ADP + phosphate + H(+). Part of the ABC transporter complex GltIJKL involved in glutamate and aspartate uptake. Probably responsible for energy coupling to the transport system. This is Glutamate/aspartate import ATP-binding protein GltL (gltL) from Escherichia coli O157:H7.